The chain runs to 335 residues: Holliday junction branch migration complex subunit RuvB (335 aa).

The large ATPase domain (RuvB-L) stretch occupies residues 4–184 (ADRIISSNAQ…FGIVQRLEFY (181 aa)). ATP contacts are provided by residues Ile-23, Arg-24, Gly-65, Lys-68, Thr-69, Thr-70, 131 to 133 (EDY), Arg-174, Tyr-184, and Arg-221. Thr-69 is a binding site for Mg(2+). The segment at 185–255 (SVEDLTSIVA…IAKSALSMLD (71 aa)) is small ATPAse domain (RuvB-S). Positions 258–335 (QAGFDYLDRK…RHFGLDKLTE (78 aa)) are head domain (RuvB-H). DNA-binding residues include Arg-294, Arg-313, and Arg-318.

The protein belongs to the RuvB family. Homohexamer. Forms an RuvA(8)-RuvB(12)-Holliday junction (HJ) complex. HJ DNA is sandwiched between 2 RuvA tetramers; dsDNA enters through RuvA and exits via RuvB. An RuvB hexamer assembles on each DNA strand where it exits the tetramer. Each RuvB hexamer is contacted by two RuvA subunits (via domain III) on 2 adjacent RuvB subunits; this complex drives branch migration. In the full resolvosome a probable DNA-RuvA(4)-RuvB(12)-RuvC(2) complex forms which resolves the HJ.

Its subcellular location is the cytoplasm. The enzyme catalyses ATP + H2O = ADP + phosphate + H(+). Its function is as follows. The RuvA-RuvB-RuvC complex processes Holliday junction (HJ) DNA during genetic recombination and DNA repair, while the RuvA-RuvB complex plays an important role in the rescue of blocked DNA replication forks via replication fork reversal (RFR). RuvA specifically binds to HJ cruciform DNA, conferring on it an open structure. The RuvB hexamer acts as an ATP-dependent pump, pulling dsDNA into and through the RuvAB complex. RuvB forms 2 homohexamers on either side of HJ DNA bound by 1 or 2 RuvA tetramers; 4 subunits per hexamer contact DNA at a time. Coordinated motions by a converter formed by DNA-disengaged RuvB subunits stimulates ATP hydrolysis and nucleotide exchange. Immobilization of the converter enables RuvB to convert the ATP-contained energy into a lever motion, pulling 2 nucleotides of DNA out of the RuvA tetramer per ATP hydrolyzed, thus driving DNA branch migration. The RuvB motors rotate together with the DNA substrate, which together with the progressing nucleotide cycle form the mechanistic basis for DNA recombination by continuous HJ branch migration. Branch migration allows RuvC to scan DNA until it finds its consensus sequence, where it cleaves and resolves cruciform DNA. This is Holliday junction branch migration complex subunit RuvB from Mannheimia succiniciproducens (strain KCTC 0769BP / MBEL55E).